The chain runs to 286 residues: uncharacterized protein (286 aa).

Belongs to the NmrA-type oxidoreductase family.

This is an uncharacterized protein from Bacillus subtilis (strain 168).